The sequence spans 431 residues: Beclin-2 (431 aa).

Residues Leu17–Ser74 form a disordered region. A coiled-coil region spans residues Leu125 to Glu248. The tract at residues Glu173–Arg243 is required for homodimer formation.

Belongs to the beclin family. In terms of assembly, homodimer (via coiled-coil domain). Interacts (via coiled-coil domain) with ATG14 (via coiled-coil domain); this interaction is tighter than BECN2 self-association. Interacts with AMBRA1, UVRAG and PIK3C3/VPS34; these interactions are not disrupted by starvation. Does not interact with RUBCN. Interacts (via N-terminus) with GPRASP1/GASP1; the interaction is direct. In terms of tissue distribution, present in fetal and adult brain (at protein level).

The protein resides in the cytoplasm. Involved in 2 distinct lysosomal degradation pathways: acts as a regulator of autophagy and as a regulator of G-protein coupled receptors turnover. Regulates degradation in lysosomes of a variety of G-protein coupled receptors via its interaction with GPRASP1/GASP1. This Homo sapiens (Human) protein is Beclin-2.